The following is a 181-amino-acid chain: MAFLTALILVSIVTAAHGQTVVSIPLGHNYTLIGPPITSEVIWTKLGSVDYFDIICNKTKPIIVTCNIQNLTLINVSKVYSGYYYGYDRYSSQYRNYLVRVTQSKTTKMPNMAEIRSDDNSLETFTSSTTPDEKNIPDSMIAIIAAVAVVMALPVICMLLYACRYKKFHPKKQDLLLRLNI.

N-linked (GlcNAc...) asparagine; by host glycans are attached at residues asparagine 29, asparagine 57, asparagine 70, and asparagine 75.

It belongs to the adenoviridae E3_20 family.

Functionally, E3 proteins seem to be dispensable for virus growth in tissue culture cells. They are potentially important for virus growth under special conditions; E3 region may help adenoviruses to evade the immune surveillance of the host. This is Early E3 20.3 kDa glycoprotein from Homo sapiens (Human).